The primary structure comprises 637 residues: Nucleoside triphosphatase I (637 aa).

The Helicase ATP-binding domain occupies 43–205; that stretch reads FLGLNSMNSI…QMLVNLLRPG (163 aa). Residue 56-63 coordinates ATP; it reads QETGVGKT. A DEXH box motif is present at residues 142–145; sequence DECH. The 180-residue stretch at 358–537 folds into the Helicase C-terminal domain; sequence ELYNYLYEHS…QLYKVFKHSS (180 aa). Residues 459–526 form a binding to the cap-specific mRNA (nucleoside-2'-O-)-methyltransferase region; the sequence is DIFILDMTWN…DIIQSKSKEF (68 aa).

It belongs to the helicase family. NPH I subfamily. In terms of assembly, monomer. Interacts (via C-terminus) with RAP94 (via N-terminus). Interacts with the cap-specific mRNA (nucleoside-2'-O-)-methyltransferase.

The protein resides in the virion. The enzyme catalyses a ribonucleoside 5'-triphosphate + H2O = a ribonucleoside 5'-diphosphate + phosphate + H(+). In terms of biological role, DNA-dependent ATPase required for providing the needed energy to achieve the termination of early transcripts. Acts in concert with the RAP94 subunit of the virion RNA polymerase and the capping enzyme/VTF to catalyze release of UUUUUNU-containing nascent RNA from the elongation complex. NPH-I must bind ssDNA in order to exhibit ATPase activity. This is Nucleoside triphosphatase I (NPH1) from Vertebrata (FPV).